Reading from the N-terminus, the 34-residue chain is Photosystem I reaction center subunit XII (34 aa).

A helical membrane pass occupies residues Ile-10–Tyr-32.

Belongs to the PsaM family.

Its subcellular location is the cellular thylakoid membrane. The polypeptide is Photosystem I reaction center subunit XII (Synechococcus sp. (strain RCC307)).